Reading from the N-terminus, the 133-residue chain is Large ribosomal subunit protein uL15 (133 aa).

Residues 1-58 form a disordered region; it reads MALQNLTPAPGSTHATKRLGRGQGSGNGKTAGKGNKGQRARKGYNEKRGFEGGQQPLQ. Residues 21–35 are compositionally biased toward gly residues; it reads RGQGSGNGKTAGKGN.

It belongs to the universal ribosomal protein uL15 family. As to quaternary structure, part of the 50S ribosomal subunit.

Binds to the 23S rRNA. This is Large ribosomal subunit protein uL15 from Campylobacter curvus (strain 525.92).